The chain runs to 174 residues: Large ribosomal subunit protein uL10 (174 aa).

This sequence belongs to the universal ribosomal protein uL10 family. In terms of assembly, part of the ribosomal stalk of the 50S ribosomal subunit. The N-terminus interacts with L11 and the large rRNA to form the base of the stalk. The C-terminus forms an elongated spine to which L12 dimers bind in a sequential fashion forming a multimeric L10(L12)X complex.

Forms part of the ribosomal stalk, playing a central role in the interaction of the ribosome with GTP-bound translation factors. The sequence is that of Large ribosomal subunit protein uL10 from Bordetella petrii (strain ATCC BAA-461 / DSM 12804 / CCUG 43448).